A 236-amino-acid polypeptide reads, in one-letter code: 2-C-methyl-D-erythritol 4-phosphate cytidylyltransferase (236 aa).

It belongs to the IspD/TarI cytidylyltransferase family. IspD subfamily.

The enzyme catalyses 2-C-methyl-D-erythritol 4-phosphate + CTP + H(+) = 4-CDP-2-C-methyl-D-erythritol + diphosphate. The protein operates within isoprenoid biosynthesis; isopentenyl diphosphate biosynthesis via DXP pathway; isopentenyl diphosphate from 1-deoxy-D-xylulose 5-phosphate: step 2/6. Its function is as follows. Catalyzes the formation of 4-diphosphocytidyl-2-C-methyl-D-erythritol from CTP and 2-C-methyl-D-erythritol 4-phosphate (MEP). This Pseudomonas savastanoi pv. phaseolicola (strain 1448A / Race 6) (Pseudomonas syringae pv. phaseolicola (strain 1448A / Race 6)) protein is 2-C-methyl-D-erythritol 4-phosphate cytidylyltransferase.